Here is a 210-residue protein sequence, read N- to C-terminus: Selenoprotein T2 (210 aa).

Residues 1-21 (MAEYSQTGILTALLLFTVVTV) form the signal peptide. A cross-link (cysteinyl-selenocysteine (Cys-Sec)) is located at residues 62-65 (CISU). Residue U65 is a non-standard amino acid, selenocysteine.

This sequence belongs to the SelWTH family. Selenoprotein T subfamily. May contain a selenide-sulfide bond between Cys-62 and Sec-65. This bond is speculated to serve as redox-active pair. Widely expressed in the embryo.

The sequence is that of Selenoprotein T2 from Danio rerio (Zebrafish).